The chain runs to 243 residues: Probable 6-oxopurine nucleoside phosphorylase (243 aa).

Phosphate-binding positions include Thr8 and 48 to 49 (RH). A substrate-binding site is contributed by Met174. Thr175 is a binding site for phosphate. Position 198–200 (198–200 (NYA)) interacts with substrate.

Belongs to the PNP/MTAP phosphorylase family. MTAP subfamily. Homohexamer. Dimer of a homotrimer.

It carries out the reaction a purine D-ribonucleoside + phosphate = a purine nucleobase + alpha-D-ribose 1-phosphate. Its pathway is purine metabolism; purine nucleoside salvage. Its function is as follows. Purine nucleoside phosphorylase which is highly specific for 6-oxopurine nucleosides. Cleaves guanosine or inosine to respective bases and sugar-1-phosphate molecules. Involved in purine salvage. The polypeptide is Probable 6-oxopurine nucleoside phosphorylase (Archaeoglobus fulgidus (strain ATCC 49558 / DSM 4304 / JCM 9628 / NBRC 100126 / VC-16)).